Consider the following 126-residue polypeptide: Ribosome-binding factor A (126 aa).

The protein belongs to the RbfA family. In terms of assembly, monomer. Binds 30S ribosomal subunits, but not 50S ribosomal subunits or 70S ribosomes.

It localises to the cytoplasm. In terms of biological role, one of several proteins that assist in the late maturation steps of the functional core of the 30S ribosomal subunit. Associates with free 30S ribosomal subunits (but not with 30S subunits that are part of 70S ribosomes or polysomes). Required for efficient processing of 16S rRNA. May interact with the 5'-terminal helix region of 16S rRNA. The sequence is that of Ribosome-binding factor A from Histophilus somni (strain 129Pt) (Haemophilus somnus).